The primary structure comprises 485 residues: MVGRRKALLFSLCFFFLSLPSFSSLPSFQTLFPNSHSLPCASPVSFQPDSDSESLLESEFESGSDSESSSSITLNLDHIDALSSNKTPDELFSSRLQRDSRRVKSIATLAAQIPGRNVTHAPRPGGFSSSVVSGLSQGSGEYFTRLGVGTPARYVYMVLDTGSDIVWLQCAPCRRCYSQSDPIFDPRKSKTYATIPCSSPHCRRLDSAGCNTRRKTCLYQVSYGDGSFTVGDFSTETLTFRRNRVKGVALGCGHDNEGLFVGAAGLLGLGKGKLSFPGQTGHRFNQKFSYCLVDRSASSKPSSVVFGNAAVSRIARFTPLLSNPKLDTFYYVGLLGISVGGTRVPGVTASLFKLDQIGNGGVIIDSGTSVTRLIRPAYIAMRDAFRVGAKTLKRAPDFSLFDTCFDLSNMNEVKVPTVVLHFRGADVSLPATNYLIPVDTNGKFCFAFAGTMGGLSIIGNIQQQGFRVVYDLASSRVGFAPGGCA.

The first 23 residues, 1 to 23 (MVGRRKALLFSLCFFFLSLPSFS), serve as a signal peptide directing secretion. The segment at 43–71 (PVSFQPDSDSESLLESEFESGSDSESSSS) is disordered. Positions 50 to 64 (SDSESLLESEFESGS) are enriched in acidic residues. The 339-residue stretch at 142–480 (YFTRLGVGTP…DLASSRVGFA (339 aa)) folds into the Peptidase A1 domain. Residues Asp-160 and Asp-365 contribute to the active site.

It belongs to the peptidase A1 family.

Aspartyl protease. Not able to cleave BAG6. The polypeptide is Aspartyl protease family protein 2 (Arabidopsis thaliana (Mouse-ear cress)).